We begin with the raw amino-acid sequence, 329 residues long: Beta-ketoacyl-[acyl-carrier-protein] synthase III (329 aa).

Active-site residues include Cys113 and His255. An ACP-binding region spans residues 256–260 (QANQR). Asn285 is an active-site residue.

It belongs to the thiolase-like superfamily. FabH family. Homodimer.

It is found in the cytoplasm. The enzyme catalyses malonyl-[ACP] + acetyl-CoA + H(+) = 3-oxobutanoyl-[ACP] + CO2 + CoA. The protein operates within lipid metabolism; fatty acid biosynthesis. In terms of biological role, catalyzes the condensation reaction of fatty acid synthesis by the addition to an acyl acceptor of two carbons from malonyl-ACP. Catalyzes the first condensation reaction which initiates fatty acid synthesis and may therefore play a role in governing the total rate of fatty acid production. Possesses both acetoacetyl-ACP synthase and acetyl transacylase activities. Its substrate specificity determines the biosynthesis of branched-chain and/or straight-chain of fatty acids. This chain is Beta-ketoacyl-[acyl-carrier-protein] synthase III, found in Chlorobium phaeovibrioides (strain DSM 265 / 1930) (Prosthecochloris vibrioformis (strain DSM 265)).